A 494-amino-acid chain; its full sequence is Cytochrome P450 2A8 (494 aa).

Cys439 contributes to the heme binding site.

This sequence belongs to the cytochrome P450 family. Heme is required as a cofactor. Liver.

It is found in the endoplasmic reticulum membrane. The protein resides in the microsome membrane. It catalyses the reaction an organic molecule + reduced [NADPH--hemoprotein reductase] + O2 = an alcohol + oxidized [NADPH--hemoprotein reductase] + H2O + H(+). Highly active in 7-ethoxycoumarin O-deethylation, and benzphetamine N-demethylation; moderately active in testosterone 7-alpha-hydroxylation, ethylmorphine N-demethylation, p-nitroanisole O-demethylation; and only slightly active in benzopyrene 3-hydroxylation, 7-ethoxyresorufin O-deethylation, testosterone 2-alpha-hydroxylation and testosterone 17-oxidation. Competent in the metabolic activation of aflatoxin B1. This is Cytochrome P450 2A8 (CYP2A8) from Mesocricetus auratus (Golden hamster).